We begin with the raw amino-acid sequence, 262 residues long: Serine/arginine-rich splicing factor 10 (262 aa).

The RRM domain maps to Thr10–Gly88. Phosphoserine occurs at positions 23, 106, and 108. The segment covering Tyr116–Arg126 has biased composition (basic and acidic residues). The segment at Tyr116 to His262 is disordered. Residues Ser129, Ser131, and Ser133 each carry the phosphoserine modification. The segment covering Phe134–Thr150 has biased composition (low complexity). 3 positions are modified to phosphoserine: Ser158, Ser160, and Arg168. Composition is skewed to basic residues over residues Phe165–Gln186 and Lys194–Gly207. Residues Ser209–Arg234 are compositionally biased toward basic and acidic residues. Over residues Arg252–His262 the composition is skewed to low complexity.

The protein belongs to the splicing factor SR family. As to quaternary structure, the phosphorylated but not the dephosphorylated form interacts with TRA2B/SFRS10. The dephosphorylated form interacts with SNRNP70. Isoform 1 interacts with FUS C-terminus. Isoform 3 interacts with FUS C-terminus. Interacts with YTHDC1, leading to inhibit RNA-binding activity of SRSF10. In terms of processing, phosphorylated. Fully dephosphorylated in mitosis and partially dephosphorylated on heat shock. As to expression, widely expressed.

The protein resides in the nucleus speckle. The protein localises to the cytoplasm. Its function is as follows. Splicing factor that in its dephosphorylated form acts as a general repressor of pre-mRNA splicing. Seems to interfere with the U1 snRNP 5'-splice recognition of SNRNP70. Required for splicing repression in M-phase cells and after heat shock. Also acts as a splicing factor that specifically promotes exon skipping during alternative splicing. Interaction with YTHDC1, a RNA-binding protein that recognizes and binds N6-methyladenosine (m6A)-containing RNAs, prevents SRSF10 from binding to its mRNA-binding sites close to m6A-containing regions, leading to inhibit exon skipping during alternative splicing. May be involved in regulation of alternative splicing in neurons, with isoform 1 acting as a positive and isoform 3 as a negative regulator. This is Serine/arginine-rich splicing factor 10 (SRSF10) from Homo sapiens (Human).